Reading from the N-terminus, the 160-residue chain is SsrA-binding protein (160 aa).

Positions 136 to 160 (KRDTVRERDSNRELQRAVRNKGKED) are disordered.

It belongs to the SmpB family.

Its subcellular location is the cytoplasm. Its function is as follows. Required for rescue of stalled ribosomes mediated by trans-translation. Binds to transfer-messenger RNA (tmRNA), required for stable association of tmRNA with ribosomes. tmRNA and SmpB together mimic tRNA shape, replacing the anticodon stem-loop with SmpB. tmRNA is encoded by the ssrA gene; the 2 termini fold to resemble tRNA(Ala) and it encodes a 'tag peptide', a short internal open reading frame. During trans-translation Ala-aminoacylated tmRNA acts like a tRNA, entering the A-site of stalled ribosomes, displacing the stalled mRNA. The ribosome then switches to translate the ORF on the tmRNA; the nascent peptide is terminated with the 'tag peptide' encoded by the tmRNA and targeted for degradation. The ribosome is freed to recommence translation, which seems to be the essential function of trans-translation. The polypeptide is SsrA-binding protein (Pseudomonas putida (strain W619)).